A 518-amino-acid chain; its full sequence is MARARRVKRDSVTHIYQTCKQAGTCPSDVVNKVEQTTVADNILKYGSAGVFFGGLGIGTGRGTGGATGYVPLGEGPGVRVGGTPTVVRPSLVPEAIGPVDILPIDTIAPVEPTASSLVPLTESSGADLLPGEVETIAEIHPIPEGPTIDSPVVTTTTGSSAVLEVAPEPVPPTRVRIARTQYHNPSFQILTESTPAQGESSLADHILVTSGSGGQRIGGDITDEIELTEFPSRYTFEIEEPTPPRKSSTPLQTVASAVRRRGFSLTNRRLVQQVAVDNPLFLSQPSKMVRFSFDNPAFEEEVTNIFEQDVNSFEEPPDRDFLDIKQLGRPQYSTTPAGYIRVSRLGTRGTIRTRSGAQIGSQVHFYRDLSSINTEDPIELQLLGQHSGDATIVQGPVESTFIDMDIAENPLSETIDASSNDLLLDETVEDFSGSQLVIGNRRSTTSYTVPRFETTRSSSYYVQDTDGYYVAYPESRDTIDIIYPTPELPVVVIHTHDNSGDFYLHPSLRRRKRKRKYL.

Positions Met-1–Asp-10 match the Nuclear localization signal motif. Cysteines 19 and 25 form a disulfide. The Nuclear localization signal signature appears at Arg-510–Tyr-517.

This sequence belongs to the papillomaviridae L2 protein family. Interacts with major capsid protein L1. Interacts with E2; this interaction inhibits E2 transcriptional activity but not the DNA replication function E2. Interacts with host GADD45GIP1. Interacts with host HSPA8; this interaction is required for L2 nuclear translocation. Interacts with host importins KPNB2 and KPNB3. Forms a complex with importin alpha2-beta1 heterodimers via interaction with the importin alpha2 adapter. Interacts with host DYNLT1; this interaction is essential for virus intracellular transport during entry. Interacts (via C-terminus) with host retromer subunits VPS35 and VPS29. In terms of processing, highly phosphorylated.

The protein localises to the virion. It localises to the host nucleus. The protein resides in the host early endosome. It is found in the host Golgi apparatus. In terms of biological role, minor protein of the capsid that localizes along the inner surface of the virion, within the central cavities beneath the L1 pentamers. Plays a role in capsid stabilization through interaction with the major capsid protein L1. Once the virion enters the host cell, L2 escorts the genomic DNA into the nucleus by promoting escape from the endosomal compartments and traffic through the host Golgi network. Mechanistically, the C-terminus of L2 possesses a cell-penetrating peptide that protudes from the host endosome, interacts with host cytoplasmic retromer cargo and thereby mediates the capsid delivery to the host trans-Golgi network. Plays a role through its interaction with host dynein in the intracellular microtubule-dependent transport of viral capsid toward the nucleus. Mediates the viral genome import into the nucleus through binding to host importins. Once within the nucleus, L2 localizes viral genomes to host PML bodies in order to activate early gene expression for establishment of infection. Later on, promotes late gene expression by interacting with the viral E2 protein and by inhibiting its transcriptional activation functions. During virion assembly, encapsidates the genome by direct interaction with the viral DNA. This is Minor capsid protein L2 from Homo sapiens (Human).